Here is a 448-residue protein sequence, read N- to C-terminus: Asparagine--tRNA ligase (448 aa).

The protein belongs to the class-II aminoacyl-tRNA synthetase family. Homodimer.

Its subcellular location is the cytoplasm. The enzyme catalyses tRNA(Asn) + L-asparagine + ATP = L-asparaginyl-tRNA(Asn) + AMP + diphosphate + H(+). The protein is Asparagine--tRNA ligase of Streptococcus thermophilus (strain ATCC BAA-250 / LMG 18311).